A 368-amino-acid polypeptide reads, in one-letter code: Alanine racemase (368 aa).

Catalysis depends on K40, which acts as the Proton acceptor; specific for D-alanine. K40 carries the post-translational modification N6-(pyridoxal phosphate)lysine. A substrate-binding site is contributed by R134. Y263 (proton acceptor; specific for L-alanine) is an active-site residue. M310 provides a ligand contact to substrate.

Belongs to the alanine racemase family. Requires pyridoxal 5'-phosphate as cofactor.

It carries out the reaction L-alanine = D-alanine. Its pathway is amino-acid biosynthesis; D-alanine biosynthesis; D-alanine from L-alanine: step 1/1. Catalyzes the interconversion of L-alanine and D-alanine. May also act on other amino acids. This Listeria monocytogenes serotype 4b (strain CLIP80459) protein is Alanine racemase (alr).